A 616-amino-acid chain; its full sequence is Chaperone protein HscA (616 aa).

Belongs to the heat shock protein 70 family.

Functionally, chaperone involved in the maturation of iron-sulfur cluster-containing proteins. Has a low intrinsic ATPase activity which is markedly stimulated by HscB. Involved in the maturation of IscU. This Shigella boydii serotype 18 (strain CDC 3083-94 / BS512) protein is Chaperone protein HscA.